The following is a 398-amino-acid chain: GATA transcription factor 21 (398 aa).

The disordered stretch occupies residues 20–51 (QPFFYPLGSSSSLHHHHHHHHHQVPSNSSSSS). A compositionally biased stretch (basic residues) spans 32-42 (LHHHHHHHHHQ). Positions 109–116 (PKKETRLK) match the Nuclear localization signal motif. The disordered stretch occupies residues 122–144 (KDHEDQPHPLHQNPTKPDSDSDK). The GATA-type zinc finger occupies 226 to 280 (NGVIRVCSDCNTTKTPLWRSGPRGPKSLCNACGIRQRKARRAAMAAAAAAGDQEV). The interval 289–353 (LPLKKKLQNK…KSTTSSNSSI (65 aa)) is disordered. The segment covering 291–302 (LKKKLQNKKKRS) has biased composition (basic residues). Residues 343-353 (SKSTTSSNSSI) are compositionally biased toward low complexity.

Belongs to the type IV zinc-finger family. Class B subfamily. Interacts with SNL1. Forms heterodimers with GATA18. In terms of tissue distribution, expressed predominantly in leaves, and barely in stems, flowers and siliques.

The protein localises to the nucleus. Transcriptional regulator that specifically binds 5'-GATA-3' or 5'-GAT-3' motifs within gene promoters. Involved in the modulation of chloroplast development, growth and division in a cytokinin-dependent manner. Repressor of the gibberellic acid (GA) signaling pathway that represses flowering and modulates greening, in a SOC1-dependent manner. Prevents the accumulation of SOC1 during flowering. Promotes chlorophyll biosynthesis throughout the plant, by regulating chlorophyll biosynthetic genes (e.g. HEMA1 and GUN4) and chloroplast localized glutamate synthase (e.g. GLU1). Involved in the regulation of sugar-sensing genes (e.g. HXK1, HXK2, STP13 and PLT6). Regulator of germination, senescence, elongation growth and flowering time. Also influences leaf starch content. The chain is GATA transcription factor 21 from Arabidopsis thaliana (Mouse-ear cress).